Here is a 417-residue protein sequence, read N- to C-terminus: NADH-quinone oxidoreductase subunit D (417 aa).

It belongs to the complex I 49 kDa subunit family. NDH-1 is composed of 14 different subunits. Subunits NuoB, C, D, E, F, and G constitute the peripheral sector of the complex.

It localises to the cell inner membrane. The enzyme catalyses a quinone + NADH + 5 H(+)(in) = a quinol + NAD(+) + 4 H(+)(out). Its function is as follows. NDH-1 shuttles electrons from NADH, via FMN and iron-sulfur (Fe-S) centers, to quinones in the respiratory chain. The immediate electron acceptor for the enzyme in this species is believed to be ubiquinone. Couples the redox reaction to proton translocation (for every two electrons transferred, four hydrogen ions are translocated across the cytoplasmic membrane), and thus conserves the redox energy in a proton gradient. This Nitrosomonas eutropha (strain DSM 101675 / C91 / Nm57) protein is NADH-quinone oxidoreductase subunit D.